The primary structure comprises 117 residues: UPF0102 protein YPN_3432 (117 aa).

This sequence belongs to the UPF0102 family.

The sequence is that of UPF0102 protein YPN_3432 from Yersinia pestis bv. Antiqua (strain Nepal516).